Reading from the N-terminus, the 153-residue chain is Hemoglobin-3 (153 aa).

Ser2 carries the post-translational modification N-acetylserine. In terms of domain architecture, Globin spans 4–150 (GLTGPQKAAL…ICRVQGDFMK (147 aa)). His99 lines the heme b pocket.

Belongs to the globin family. As to quaternary structure, homotetramer.

It localises to the cytoplasm. The sequence is that of Hemoglobin-3 from Phacoides pectinatus (Thick lucine).